A 258-amino-acid chain; its full sequence is Exu regulon transcriptional regulator (258 aa).

The 69-residue stretch at Arg-7–Asn-75 folds into the HTH gntR-type domain. A DNA-binding region (H-T-H motif) is located at residues Glu-35–Ile-54.

Repressor for the exu regulon that encode genes involved in hexuronate utilization. It regulates the ExuT, UxaCA and UxuRAB operons. Binds D-tagaturonate and D-fructuronate as inducers. This chain is Exu regulon transcriptional regulator (exuR), found in Escherichia coli O157:H7.